Here is a 345-residue protein sequence, read N- to C-terminus: Probable dual-specificity RNA methyltransferase RlmN (345 aa).

The active-site Proton acceptor is E90. Residues 96–326 (YDYGNSICIS…STIRKEMGAD (231 aa)) enclose the Radical SAM core domain. A disulfide bond links C103 and C331. Residues C110, C114, and C117 each coordinate [4Fe-4S] cluster. S-adenosyl-L-methionine-binding positions include 157–158 (GE), S189, 212–214 (SLH), and N288. C331 (S-methylcysteine intermediate) is an active-site residue.

This sequence belongs to the radical SAM superfamily. RlmN family. [4Fe-4S] cluster serves as cofactor.

The protein resides in the cytoplasm. It carries out the reaction adenosine(2503) in 23S rRNA + 2 reduced [2Fe-2S]-[ferredoxin] + 2 S-adenosyl-L-methionine = 2-methyladenosine(2503) in 23S rRNA + 5'-deoxyadenosine + L-methionine + 2 oxidized [2Fe-2S]-[ferredoxin] + S-adenosyl-L-homocysteine. The catalysed reaction is adenosine(37) in tRNA + 2 reduced [2Fe-2S]-[ferredoxin] + 2 S-adenosyl-L-methionine = 2-methyladenosine(37) in tRNA + 5'-deoxyadenosine + L-methionine + 2 oxidized [2Fe-2S]-[ferredoxin] + S-adenosyl-L-homocysteine. Its function is as follows. Specifically methylates position 2 of adenine 2503 in 23S rRNA and position 2 of adenine 37 in tRNAs. This is Probable dual-specificity RNA methyltransferase RlmN from Clostridium acetobutylicum (strain ATCC 824 / DSM 792 / JCM 1419 / IAM 19013 / LMG 5710 / NBRC 13948 / NRRL B-527 / VKM B-1787 / 2291 / W).